The sequence spans 154 residues: MEADWRRIDIDAFDPESGRLTAADLVPPYETTVTLQELQPRMNQLRSLATSGDSLGAVQLLTTDPPYSADAPTKEQYFKSVLEALTQVRQADIGNVIKNLSDSQRDVLVKYLYKGMSVPQGQKQGGVLLAWLERITQVSGVTPIVHYISDRRTV.

T142 bears the Phosphothreonine mark.

Belongs to the ARPC5 family. In terms of assembly, component of the Arp2/3 complex composed of ARP2, ARP3, ARC40/p41-ARC, ARC35/p34-ARC, ARC18/p21-ARC, ARC19/p20-ARC and ARC16/p16-ARC.

The protein localises to the cytoplasm. Its subcellular location is the cytoskeleton. The protein resides in the actin patch. Functionally, functions as a component of the Arp2/3 complex which is involved in regulation of actin polymerization and together with an activating nucleation-promoting factor (NPF) mediates the formation of branched actin networks. This Saccharomyces cerevisiae (strain ATCC 204508 / S288c) (Baker's yeast) protein is Actin-related protein 2/3 complex subunit 5 (ARC15).